A 172-amino-acid chain; its full sequence is R-phycocyanin beta chain (172 aa).

The (2R,3E)-phycoerythrobilin site is built by N35 and D39. (2R,3E)-phycocyanobilin contacts are provided by residues N72, C82, and 84–85 (RD). N72 is subject to N4-methylasparagine. (2R,3E)-phycoerythrobilin-binding positions include 149–151 (PAG) and C153.

The protein belongs to the phycobiliprotein family. As to quaternary structure, heterododecamer of 6 alpha and 6 beta chains. The basic functional unit of phycobiliproteins is a ring-shaped hexamer formed from two back-to-back trimers contacting via the alpha chain subunits. The trimers are composed of alpha/beta subunit heterodimers arranged around a three-fold axis of symmetry. The phycoerythrins also contain a gamma subunit which is located in the center of the hexamer. Contains one covalently linked phycocyanobilin chromophore and one covalently linked phycoerythrobilin chromophore.

Its subcellular location is the plastid. The protein resides in the chloroplast thylakoid membrane. In terms of biological role, light-harvesting photosynthetic tetrapyrrole chromophore-protein from the phycobiliprotein complex (phycobilisome, PBS). Phycocyanin is the major phycobiliprotein in the PBS rod. The chain is R-phycocyanin beta chain (rpcB) from Polysiphonia urceolata (Red alga).